The sequence spans 332 residues: Phospho-N-acetylmuramoyl-pentapeptide-transferase (332 aa).

A run of 10 helical transmembrane segments spans residues 3–23, 52–72, 74–94, 115–135, 140–160, 172–192, 197–217, 223–243, 248–268, and 311–331; these read FALM…PRFI, MGGT…ATAF, LLTG…VVGF, LALQ…GAGG, VFGH…FWLV, IDGL…VIAF, FDIL…FVYN, IFMG…ISIA, WTLL…MLQV, and VDFF…AILY.

The protein belongs to the glycosyltransferase 4 family. MraY subfamily. It depends on Mg(2+) as a cofactor.

It localises to the cell membrane. The catalysed reaction is UDP-N-acetyl-alpha-D-muramoyl-L-alanyl-gamma-D-glutamyl-L-lysyl-D-alanyl-D-alanine + di-trans,octa-cis-undecaprenyl phosphate = Mur2Ac(oyl-L-Ala-gamma-D-Glu-L-Lys-D-Ala-D-Ala)-di-trans,octa-cis-undecaprenyl diphosphate + UMP. It functions in the pathway cell wall biogenesis; peptidoglycan biosynthesis. Catalyzes the initial step of the lipid cycle reactions in the biosynthesis of the cell wall peptidoglycan: transfers peptidoglycan precursor phospho-MurNAc-pentapeptide from UDP-MurNAc-pentapeptide onto the lipid carrier undecaprenyl phosphate, yielding undecaprenyl-pyrophosphoryl-MurNAc-pentapeptide, known as lipid I. The protein is Phospho-N-acetylmuramoyl-pentapeptide-transferase of Streptococcus suis (strain 98HAH33).